A 356-amino-acid chain; its full sequence is MLARAARGTGALLLKGSVQASARAPRRASSGLPRNTVVLFVPQQEAWVVERMGRFHRILEPGLNILIPVLDRIRYVQSLKEIVINVPEQSAVTLDNVTLQIDGVLYLRIMDPYKASYGVEDPEYAVTQLAQTTMRSELGKLSLDKVFRERESLNASIVDAINQAADCWGIRCLRYEIKDIHVPPRVKESMKMQVEAERRKRATVLESEGTRESAINVAEGKKQAQILASEAEKAEQINQAAGEASAVLAKAKAKAEAIRILAAALTQHNGDAAASLTVAEQYVSAFSKLAKDSNTILLPSNPGDVTSMVAQAMGVYGALTKAPIPEAQDSVSSRSSRDVRSTDASLDEELDRVKLS.

The transit peptide at 1–28 (MLARAARGTGALLLKGSVQASARAPRRA) directs the protein to the mitochondrion. Residue S17 is modified to Phosphoserine; by PKC/PRKCZ. Y124 bears the Phosphotyrosine mark. Position 145 is an N6-acetyllysine; alternate (K145). K145 is subject to N6-succinyllysine; alternate. A coiled-coil region spans residues 215–252 (INVAEGKKQAQILASEAEKAEQINQAAGEASAVLAKAK). Position 233 is an N6-acetyllysine (K233). A disordered region spans residues 326–356 (EAQDSVSSRSSRDVRSTDASLDEELDRVKLS). S330 carries the post-translational modification Phosphoserine.

The protein belongs to the band 7/mec-2 family. Forms homooligomers. Interacts with MFN2; may form heterooligomers with this mediator of mitochondrial fusion. Interacts with PHB1 and PHB2; stabilizes and recruits them to cardiolipin-enriched mitochondrial membranes. Interacts with CACNA2D2.

The protein localises to the cell membrane. Its subcellular location is the mitochondrion. The protein resides in the mitochondrion inner membrane. It is found in the mitochondrion intermembrane space. It localises to the membrane raft. The protein localises to the cytoplasm. Its subcellular location is the cytoskeleton. Its function is as follows. Mitochondrial protein that probably regulates the biogenesis and the activity of mitochondria. Stimulates cardiolipin biosynthesis, binds cardiolipin-enriched membranes where it recruits and stabilizes some proteins including prohibitin and may therefore act in the organization of functional microdomains in mitochondrial membranes. Through regulation of the mitochondrial function may play a role into several biological processes including cell migration, cell proliferation, T-cell activation, calcium homeostasis and cellular response to stress. May play a role in calcium homeostasis through negative regulation of calcium efflux from mitochondria. Required for mitochondrial hyperfusion a pro-survival cellular response to stress which results in increased ATP production by mitochondria. May also regulate the organization of functional domains at the plasma membrane and play a role in T-cell activation through association with the T-cell receptor signaling complex and its regulation. The chain is Stomatin-like protein 2, mitochondrial (STOML2) from Bos taurus (Bovine).